The chain runs to 131 residues: C-type natriuretic peptide 1 (131 aa).

An N-terminal signal peptide occupies residues 1–22 (MLCPVLLCATLLLLTPFEVTEA). A propeptide spanning residues 23-109 (RALHPSADAV…KRAEPDRSRR (87 aa)) is cleaved from the precursor. A disulfide bridge connects residues Cys-115 and Cys-131.

This sequence belongs to the natriuretic peptide family. As to expression, brain and spinal cord.

The protein localises to the secreted. Its function is as follows. Exhibits natriuretic and vasodepressant activity. Has cGMP-stimulating activity. May help to regulate body fluid homeostasis in a variety of aquatic environments. In Oryzias latipes (Japanese rice fish), this protein is C-type natriuretic peptide 1.